Here is a 292-residue protein sequence, read N- to C-terminus: 4-diphosphocytidyl-2-C-methyl-D-erythritol kinase (292 aa).

K20 is a catalytic residue. 103–113 (PMGGGIGGGSS) contacts ATP. Residue D145 is part of the active site.

The protein belongs to the GHMP kinase family. IspE subfamily.

The enzyme catalyses 4-CDP-2-C-methyl-D-erythritol + ATP = 4-CDP-2-C-methyl-D-erythritol 2-phosphate + ADP + H(+). Its pathway is isoprenoid biosynthesis; isopentenyl diphosphate biosynthesis via DXP pathway; isopentenyl diphosphate from 1-deoxy-D-xylulose 5-phosphate: step 3/6. Its function is as follows. Catalyzes the phosphorylation of the position 2 hydroxy group of 4-diphosphocytidyl-2C-methyl-D-erythritol. In Cupriavidus taiwanensis (strain DSM 17343 / BCRC 17206 / CCUG 44338 / CIP 107171 / LMG 19424 / R1) (Ralstonia taiwanensis (strain LMG 19424)), this protein is 4-diphosphocytidyl-2-C-methyl-D-erythritol kinase.